The chain runs to 912 residues: Brevican core protein (912 aa).

Residues 1-22 (MAPLFLPLLATLVLAWIPVALA) form the signal peptide. The Ig-like V-type domain occupies 36 to 155 (RVRIAGDAPL…SSDAVEVKVK (120 aa)). Intrachain disulfides connect C57-C137, C179-C250, C203-C224, C277-C352, and C301-C322. A glycan (N-linked (GlcNAc...) asparagine) is linked at N130. 2 Link domains span residues 157–252 (VVFL…YCYA) and 257–354 (GELF…YCFR). The N-linked (GlcNAc...) asparagine glycan is linked to N337. Disordered stretches follow at residues 408–427 (IPII…PAEA) and 438–651 (SIVP…SGDC). S418 carries the post-translational modification Phosphoserine. O-linked (Xyl...) (chondroitin sulfate) serine glycosylation is present at S418. Residues 448–463 (EEGKVLEQEEKYRGEE) are compositionally biased toward basic and acidic residues. Residues 464–478 (EKEEEEEEEEVEDEA) show a composition bias toward acidic residues. The span at 520-537 (VSPPPYDEPEAPRPPRVL) shows a compositional bias: pro residues. Over residues 603-617 (GDTRDLETPSEENSR) the composition is skewed to basic and acidic residues. Residues 647-683 (SSGDCVPSPCHNGGTCLEEEEGVRCLCLPGYGGDLCD) enclose the EGF-like domain. Cystine bridges form between C651-C662, C656-C671, C673-C682, C689-C700, C717-C809, C785-C801, C816-C859, and C845-C872. The C-type lectin domain maps to 683–811 (DVGLHFCSPG…NYHLSYTCKM (129 aa)). The Sushi domain occupies 814–874 (VSCGPPPELP…WGLPQISCVP (61 aa)).

This sequence belongs to the aggrecan/versican proteoglycan family. As to quaternary structure, interacts with TNR. O-glycosylated; contains chondroitin sulfate. In terms of tissue distribution, brain; expressed in cerebellar astrocytes but not in neurons.

It localises to the secreted. The protein resides in the extracellular space. Its subcellular location is the extracellular matrix. May play a role in the terminally differentiating and the adult nervous system during postnatal development. Could stabilize interactions between hyaluronan (HA) and brain proteoglycans. The chain is Brevican core protein (BCAN) from Bos taurus (Bovine).